The following is a 383-amino-acid chain: Succinyl-diaminopimelate desuccinylase (383 aa).

H79 contacts Zn(2+). D81 is an active-site residue. D110 is a binding site for Zn(2+). Residue E141 is the Proton acceptor of the active site. Residues E142, E170, and H355 each coordinate Zn(2+).

Belongs to the peptidase M20A family. DapE subfamily. Homodimer. It depends on Zn(2+) as a cofactor. Co(2+) is required as a cofactor.

It carries out the reaction N-succinyl-(2S,6S)-2,6-diaminopimelate + H2O = (2S,6S)-2,6-diaminopimelate + succinate. The protein operates within amino-acid biosynthesis; L-lysine biosynthesis via DAP pathway; LL-2,6-diaminopimelate from (S)-tetrahydrodipicolinate (succinylase route): step 3/3. Functionally, catalyzes the hydrolysis of N-succinyl-L,L-diaminopimelic acid (SDAP), forming succinate and LL-2,6-diaminopimelate (DAP), an intermediate involved in the bacterial biosynthesis of lysine and meso-diaminopimelic acid, an essential component of bacterial cell walls. This chain is Succinyl-diaminopimelate desuccinylase, found in Helicobacter pylori (strain P12).